The primary structure comprises 308 residues: MSGRVEVENIPGQVANLLKNVTAGDLLNVASSPAFLVAAAAIVIAAAFYSKVFNSTRPKPLDPSIWKEFPLQKKNQVSPNTAIYTFKLPHAEDVLGLPIGQHISVSADINGKNIVRSYTPISRQNARGRFELIIKTYEKGNISRHVASLKIGDTLRVKGPKGNFKYTPGLTAHLGMIAGGTGLAPMIQIVRAILQNPPDRTNITLIYANVNEEDILLRAELDALAMGYESRFNLFYVLNNPPSGWTGGVGFVTKEHIKDLLPNPNESNSKILICGPPPMVTAMKKNLEEIKYPVPNTISKLDDKVFVF.

A helical membrane pass occupies residues 29–49 (VASSPAFLVAAAAIVIAAAFY). An FAD-binding FR-type domain is found at 64-167 (SIWKEFPLQK…KGPKGNFKYT (104 aa)). Residues 147-162 (ASLK…GPKG) and 173-205 (HLGM…NITL) contribute to the FAD site.

This sequence belongs to the flavoprotein pyridine nucleotide cytochrome reductase family. As to quaternary structure, monomer. Component of the 2-(3-amino-3-carboxypropyl)histidine synthase complex composed of DPH1, DPH2, DPH3 and a NADH-dependent reductase, predominantly MCR1.1. Requires FAD as cofactor.

It localises to the mitochondrion outer membrane. The enzyme catalyses 2 Fe(III)-[cytochrome b5] + NADH = 2 Fe(II)-[cytochrome b5] + NAD(+) + H(+). It catalyses the reaction 2 Fe(3+)-[Dph3] + NADH = 2 Fe(2+)-[Dph3] + NAD(+) + H(+). It functions in the pathway protein modification; peptidyl-diphthamide biosynthesis. In terms of biological role, NADH-dependent reductase for DPH3 and cytochrome b5. Required for the first step of diphthamide biosynthesis, a post-translational modification of histidine which occurs in elongation factor 2. DPH1 and DPH2 transfer a 3-amino-3-carboxypropyl (ACP) group from S-adenosyl-L-methionine (SAM) to a histidine residue, the reaction is assisted by a reduction system comprising DPH3 and a NADH-dependent reductase, predominantly MCR1.1. By reducing DPH3, also involved in the formation of the tRNA wobble base modification mcm5s 2U (5-methoxycarbonylmethyl-2-thiouridine), mediated by the elongator complex. The cytochrome b5/NADH cytochrome b5 reductase electron transfer system supports the catalytic activity of several sterol biosynthetic enzymes. The chain is NADH-cytochrome b5 reductase 1 (MCR1.1) from Laccaria bicolor (strain S238N-H82 / ATCC MYA-4686) (Bicoloured deceiver).